The following is a 2172-amino-acid chain: Non-reducing polyketide synthase dpfgA (2172 aa).

The tract at residues 74-181 (EWIKCGNSSL…LALCVGALVD (108 aa)) is N-terminal acylcarrier protein transacylase domain (SAT). In terms of domain architecture, Ketosynthase family 3 (KS3) spans 389-783 (DDSIAIIGVS…GTNAAMLVCQ (395 aa)). Residues Cys-529, His-665, and His-706 each act as for beta-ketoacyl synthase activity in the active site. The malonyl-CoA:ACP transacylase (MAT) domain stretch occupies residues 895–1197 (VFAGQTGRQA…SFHSILLQGQ (303 aa)). Catalysis depends on Ser-981, which acts as the For acyl/malonyl transferase activity. Positions 1270–1403 (PELVSLAGPT…GTINWQGQGC (134 aa)) are N-terminal hotdog fold. Residues 1270-1581 (PELVSLAGPT…LKRIPIRSLQ (312 aa)) enclose the PKS/mFAS DH domain. Positions 1277–1575 (GPTDGETVEF…EIIGASLKRI (299 aa)) are product template (PT) domain. A C-terminal hotdog fold region spans residues 1428–1581 (SASTVQGLFV…LKRIPIRSLQ (154 aa)). 2 disordered regions span residues 1608-1631 (DSDS…HADF) and 1650-1672 (YPMD…VLSD). The segment covering 1650–1668 (YPMDSSSFSSAQPPSSASS) has biased composition (low complexity). A Carrier domain is found at 1671–1747 (SDHDQESTAL…DLYRMVLNHD (77 aa)). Ser-1707 bears the O-(pantetheine 4'-phosphoryl)serine mark. Residues 1751–1773 (DRGSTVLSDKAPKSKSDSSLHGQ) form a disordered region. Positions 1975-2155 (EFLHRVLSRL…DAGFIHVDWT (181 aa)) are methyltransferase (CMeT) domain.

It participates in secondary metabolite biosynthesis; terpenoid biosynthesis. In terms of biological role, non-reducing polyketide synthase; part of the gene cluster that mediates the biosynthesis of diterpenoid pyrones. The first step of the pathway is the synthesis of the alpha-pyrone moiety by the polyketide synthase dpfgA via condensation of one acetyl-CoA starter unit with 3 malonyl-CoA units and 2 methylations. The alpha-pyrone is then combined with geranylgeranyl pyrophosphate (GGPP) formed by the GGPP synthase dpfgD through the action of the prenyltransferase dpfgC to yield a linear alpha-pyrone diterpenoid. Subsequent steps in the diterpenoid pyrone biosynthetic pathway involve the decalin core formation, which is initiated by the epoxidation of the C10-C11 olefin by the FAD-dependent oxidoreductase dpfgE, and is followed by a cyclization cascade catalyzed by the terpene cyclase dpfgB. The short chain dehydrogenase/reductase dpfgG then oxidizes the 8S hydroxy group to a ketone and the short chain dehydrogenase/reductase dpfgH reduces the ketone to the 8R hydroxy group to yield higginsianin B. Higginsianin B is further methylated by the methyltransferase dpfgI to produce the intermediate named FDDP B. The cytochrome P450 monooxygenase dfgpJ then catalyzes a three-step oxidation at C-27 to generate a carboxylic acid as well as C-26 hydroxylation. Finally, methyltransferase dpfgK methylates the carboxylic acid generated by dpfgJ, yielding the final diterpenoid pyrones from the pathway which were named FDDP D and FDDP E. This Gibberella zeae (strain ATCC MYA-4620 / CBS 123657 / FGSC 9075 / NRRL 31084 / PH-1) (Wheat head blight fungus) protein is Non-reducing polyketide synthase dpfgA.